The following is a 297-amino-acid chain: Probable GTP 3',8-cyclase (297 aa).

Positions 4-220 (EFGREIRSFR…VVTRKFMQNR (217 aa)) constitute a Radical SAM core domain. A GTP-binding site is contributed by arginine 13. [4Fe-4S] cluster-binding residues include cysteine 20 and cysteine 24. Tyrosine 26 serves as a coordination point for S-adenosyl-L-methionine. Position 27 (cysteine 27) interacts with [4Fe-4S] cluster. Lysine 61 provides a ligand contact to GTP. Glycine 65 contributes to the S-adenosyl-L-methionine binding site. GTP is bound at residue threonine 91. Serine 115 contacts S-adenosyl-L-methionine. Lysine 151 contributes to the GTP binding site. Positions 242 and 245 each coordinate [4Fe-4S] cluster. 247 to 249 (RIR) provides a ligand contact to GTP. Position 259 (cysteine 259) interacts with [4Fe-4S] cluster.

This sequence belongs to the radical SAM superfamily. MoaA family. [4Fe-4S] cluster serves as cofactor.

The enzyme catalyses GTP + AH2 + S-adenosyl-L-methionine = (8S)-3',8-cyclo-7,8-dihydroguanosine 5'-triphosphate + 5'-deoxyadenosine + L-methionine + A + H(+). It functions in the pathway cofactor biosynthesis; molybdopterin biosynthesis. Its function is as follows. Catalyzes the cyclization of GTP to (8S)-3',8-cyclo-7,8-dihydroguanosine 5'-triphosphate. This Methanococcus vannielii (strain ATCC 35089 / DSM 1224 / JCM 13029 / OCM 148 / SB) protein is Probable GTP 3',8-cyclase.